Consider the following 263-residue polypeptide: Palmitoyltransferase ZDHHC22 (263 aa).

Over 1 to 9 the chain is Cytoplasmic; the sequence is MLALRLLNV. A helical membrane pass occupies residues 10–30; the sequence is VAPAYFLCISLVTFVLQLFLF. The Lumenal segment spans residues 31-48; the sequence is LPSMREDPTATPLFSPAV. A helical transmembrane segment spans residues 49–69; that stretch reads LHGALFLFLSANALGNYVLVI. At 70–125 the chain is on the cytoplasmic side; the sequence is QNSPDDLGTCQGTMSQRPQCPPPSTHFCRVCSRVTLRHDHHCFFTGNCIGSRNMRN. A DHHC domain is found at 91-131; that stretch reads PPSTHFCRVCSRVTLRHDHHCFFTGNCIGSRNMRNFILFCL. Residue C111 is the S-palmitoyl cysteine intermediate of the active site. Transmembrane regions (helical) follow at residues 126–146 and 147–167; these read FILF…AGVA and YISA…TLLP. Topologically, residues 168–182 are cytoplasmic; the sequence is TSISQFFSGAVLGSD. The chain crosses the membrane as a helical span at residues 183–203; that stretch reads MFVILMLYLWFAVGLACAGFC. Residues 204–263 are Lumenal-facing; sequence CHQLLLILRGQTRYQVRKGMAVRARPWRKNLQEVFGKRWLLGLLVPMFNVGTESSKQQDK.

The protein belongs to the DHHC palmitoyltransferase family. As to quaternary structure, interacts with CNN3.

The protein localises to the endoplasmic reticulum membrane. It is found in the golgi apparatus membrane. It carries out the reaction L-cysteinyl-[protein] + hexadecanoyl-CoA = S-hexadecanoyl-L-cysteinyl-[protein] + CoA. Its function is as follows. Palmitoyltransferase that could catalyze the addition of palmitate onto various protein substrates and be involved in a variety of cellular processes. Catalyzes the palmitoylation of KCNMA1, regulating localization of KCNMA1 to the plasma membrane. Might also mediate palmitoylation of CNN3. The chain is Palmitoyltransferase ZDHHC22 from Mus musculus (Mouse).